The sequence spans 535 residues: Formate--tetrahydrofolate ligase (535 aa).

Residue 50 to 57 (TPAGEGKT) participates in ATP binding.

It belongs to the formate--tetrahydrofolate ligase family.

It catalyses the reaction (6S)-5,6,7,8-tetrahydrofolate + formate + ATP = (6R)-10-formyltetrahydrofolate + ADP + phosphate. It functions in the pathway one-carbon metabolism; tetrahydrofolate interconversion. This Picrophilus torridus (strain ATCC 700027 / DSM 9790 / JCM 10055 / NBRC 100828 / KAW 2/3) protein is Formate--tetrahydrofolate ligase.